Here is a 329-residue protein sequence, read N- to C-terminus: R-linalool synthase (329 aa).

Residue D79 participates in Mg(2+) binding. The short motif at 79-83 is the DDXXD motif element; the sequence is DDQFD. R172 is a substrate binding site. Mg(2+) contacts are provided by N218 and S222. The NXXXSXXXD motif signature appears at 218–226; that stretch reads NELHSFEKD. K225 provides a ligand contact to substrate. D226 contacts Mg(2+). 308–309 is a binding site for substrate; that stretch reads RY.

The protein belongs to the terpene synthase family. Homodimer. Mg(2+) serves as cofactor.

The enzyme catalyses (2E)-geranyl diphosphate + H2O = (R)-linalool + diphosphate. It carries out the reaction (2E,6E)-farnesyl diphosphate + H2O = (6E)-nerolidol + diphosphate. In terms of biological role, in vitro, catalyzes the formation of R-linalool from geranyl diphosphate (GPP). Can also accept farnesyl diphosphate (FPP) as substrate to produce trans-nerolidol. The sequence is that of R-linalool synthase from Streptomyces clavuligerus.